A 95-amino-acid polypeptide reads, in one-letter code: Small ribosomal subunit protein bS6 (95 aa).

Belongs to the bacterial ribosomal protein bS6 family.

Its function is as follows. Binds together with bS18 to 16S ribosomal RNA. The chain is Small ribosomal subunit protein bS6 from Corynebacterium glutamicum (strain ATCC 13032 / DSM 20300 / JCM 1318 / BCRC 11384 / CCUG 27702 / LMG 3730 / NBRC 12168 / NCIMB 10025 / NRRL B-2784 / 534).